A 249-amino-acid chain; its full sequence is DNA polymerase sliding clamp 1 (249 aa).

Belongs to the PCNA family. In terms of assembly, homotrimer. The subunits circularize to form a toroid; DNA passes through its center. Replication factor C (RFC) is required to load the toroid on the DNA. Interacts with TIP.

Its activity is regulated as follows. Inhibited by interaction with the PCNA inhibitor TIP. In terms of biological role, sliding clamp subunit that acts as a moving platform for DNA processing. Responsible for tethering the catalytic subunit of DNA polymerase and other proteins to DNA during high-speed replication. This Thermococcus kodakarensis (strain ATCC BAA-918 / JCM 12380 / KOD1) (Pyrococcus kodakaraensis (strain KOD1)) protein is DNA polymerase sliding clamp 1.